The primary structure comprises 389 residues: Glutamate 5-kinase (389 aa).

Lysine 16 provides a ligand contact to ATP. Residues serine 56, aspartate 143, and asparagine 155 each coordinate substrate. Serine 175–aspartate 176 contributes to the ATP binding site. Residues alanine 281 to proline 358 enclose the PUA domain.

This sequence belongs to the glutamate 5-kinase family.

It is found in the cytoplasm. The catalysed reaction is L-glutamate + ATP = L-glutamyl 5-phosphate + ADP. It functions in the pathway amino-acid biosynthesis; L-proline biosynthesis; L-glutamate 5-semialdehyde from L-glutamate: step 1/2. Functionally, catalyzes the transfer of a phosphate group to glutamate to form L-glutamate 5-phosphate. This is Glutamate 5-kinase from Rhizobium leguminosarum bv. trifolii (strain WSM2304).